A 324-amino-acid chain; its full sequence is GSDLLTPGDNKTAHDSYAFLVNWLERFPQYKYRDFYIAGESYAGHYVPQLSQLVHRNNKGVRKPILNFKGFMVGNAVIDDYHDFVGTFEYWWTHGLISDDTYQKLQLACEFDSAEHESEACNKINNVAEAEEGLIDAYSIYTPTCKKTSLHRRRLIKGRRPWLPRGYDPCTEQYSTKYYNLPEVQKAFRANVTGIPYSWTACSDVLSDHWKDSPRSMLPIYRELIAAGIRIWVFSGDADSVVPLTATRYSIDALYLPTVTNWYPWYDEEEVAGWCQVYKGLTLVTIRGAGHEVPLHRPQQALKLFEHFLQDKPMPRPAHSIQSF.

An N-linked (GlcNAc...) asparagine glycan is attached at asparagine 10. Serine 41 is a catalytic residue. Intrachain disulfides connect cysteine 109–cysteine 121 and cysteine 145–cysteine 170. Positions 150–162 (LHRRRLIKGRRPW) are cleaved as a propeptide — linker peptide. Residue asparagine 191 is glycosylated (N-linked (GlcNAc...) asparagine). Active-site residues include aspartate 239 and histidine 291.

This sequence belongs to the peptidase S10 family. As to quaternary structure, carboxypeptidase II is a dimer, where each monomer is composed of two chains linked by a disulfide bond. Post-translationally, the linker peptide is endoproteolytically excised during enzyme maturation.

It catalyses the reaction Preferential release of a C-terminal arginine or lysine residue.. The sequence is that of Serine carboxypeptidase II-1 (CXP;2-1) from Hordeum vulgare (Barley).